The sequence spans 223 residues: Small ribosomal subunit protein uS5 (223 aa).

The disordered stretch occupies residues 1–48; sequence MPGRQRRDGGSGPAGQNGPNSGDNSNARGDNRGGGRDRRDGGRGGNAA. Residues 29–42 are compositionally biased toward basic and acidic residues; that stretch reads GDNRGGGRDRRDGG. An S5 DRBM domain is found at 53 to 116; sequence FIERVVTINR…EEARKSFFRV (64 aa).

The protein belongs to the universal ribosomal protein uS5 family. In terms of assembly, part of the 30S ribosomal subunit. Contacts proteins S4 and S8.

In terms of biological role, with S4 and S12 plays an important role in translational accuracy. Functionally, located at the back of the 30S subunit body where it stabilizes the conformation of the head with respect to the body. The protein is Small ribosomal subunit protein uS5 of Rhodococcus erythropolis (strain PR4 / NBRC 100887).